The primary structure comprises 323 residues: tRNA U34 carboxymethyltransferase (323 aa).

Residues Lys-91, Trp-105, Lys-110, Gly-130, Ile-181–Glu-182, Met-196, Tyr-200, and Arg-315 contribute to the carboxy-S-adenosyl-L-methionine site.

The protein belongs to the class I-like SAM-binding methyltransferase superfamily. CmoB family. In terms of assembly, homotetramer.

It catalyses the reaction carboxy-S-adenosyl-L-methionine + 5-hydroxyuridine(34) in tRNA = 5-carboxymethoxyuridine(34) in tRNA + S-adenosyl-L-homocysteine + H(+). Functionally, catalyzes carboxymethyl transfer from carboxy-S-adenosyl-L-methionine (Cx-SAM) to 5-hydroxyuridine (ho5U) to form 5-carboxymethoxyuridine (cmo5U) at position 34 in tRNAs. The polypeptide is tRNA U34 carboxymethyltransferase (Yersinia pseudotuberculosis serotype IB (strain PB1/+)).